A 238-amino-acid polypeptide reads, in one-letter code: DNA repair protein RecO (238 aa).

The protein belongs to the RecO family.

In terms of biological role, involved in DNA repair and RecF pathway recombination. The chain is DNA repair protein RecO from Aliivibrio fischeri (strain ATCC 700601 / ES114) (Vibrio fischeri).